Reading from the N-terminus, the 244-residue chain is 1-(5-phosphoribosyl)-5-[(5-phosphoribosylamino)methylideneamino] imidazole-4-carboxamide isomerase (244 aa).

Aspartate 8 acts as the Proton acceptor in catalysis. Aspartate 129 functions as the Proton donor in the catalytic mechanism.

It belongs to the HisA/HisF family.

The protein localises to the cytoplasm. It carries out the reaction 1-(5-phospho-beta-D-ribosyl)-5-[(5-phospho-beta-D-ribosylamino)methylideneamino]imidazole-4-carboxamide = 5-[(5-phospho-1-deoxy-D-ribulos-1-ylimino)methylamino]-1-(5-phospho-beta-D-ribosyl)imidazole-4-carboxamide. It participates in amino-acid biosynthesis; L-histidine biosynthesis; L-histidine from 5-phospho-alpha-D-ribose 1-diphosphate: step 4/9. This chain is 1-(5-phosphoribosyl)-5-[(5-phosphoribosylamino)methylideneamino] imidazole-4-carboxamide isomerase, found in Bradyrhizobium sp. (strain ORS 278).